Reading from the N-terminus, the 571-residue chain is Proline--tRNA ligase (571 aa).

This sequence belongs to the class-II aminoacyl-tRNA synthetase family. ProS type 1 subfamily. In terms of assembly, homodimer.

Its subcellular location is the cytoplasm. It catalyses the reaction tRNA(Pro) + L-proline + ATP = L-prolyl-tRNA(Pro) + AMP + diphosphate. Catalyzes the attachment of proline to tRNA(Pro) in a two-step reaction: proline is first activated by ATP to form Pro-AMP and then transferred to the acceptor end of tRNA(Pro). As ProRS can inadvertently accommodate and process non-cognate amino acids such as alanine and cysteine, to avoid such errors it has two additional distinct editing activities against alanine. One activity is designated as 'pretransfer' editing and involves the tRNA(Pro)-independent hydrolysis of activated Ala-AMP. The other activity is designated 'posttransfer' editing and involves deacylation of mischarged Ala-tRNA(Pro). The misacylated Cys-tRNA(Pro) is not edited by ProRS. The protein is Proline--tRNA ligase of Pseudomonas entomophila (strain L48).